Here is a 180-residue protein sequence, read N- to C-terminus: uncharacterized protein (180 aa).

This is an uncharacterized protein from Aquifex aeolicus (strain VF5).